We begin with the raw amino-acid sequence, 476 residues long: Bifunctional protein HldE (476 aa).

Residues 1–319 (MKVSLPAFEK…EALALHHGES (319 aa)) are ribokinase. 195 to 198 (NMSE) is an ATP binding site. Residue aspartate 264 is part of the active site. The tract at residues 345-476 (MTNGCFDILH…AIIQNIMANQ (132 aa)) is cytidylyltransferase.

It in the N-terminal section; belongs to the carbohydrate kinase PfkB family. In the C-terminal section; belongs to the cytidylyltransferase family. Homodimer.

It carries out the reaction D-glycero-beta-D-manno-heptose 7-phosphate + ATP = D-glycero-beta-D-manno-heptose 1,7-bisphosphate + ADP + H(+). The catalysed reaction is D-glycero-beta-D-manno-heptose 1-phosphate + ATP + H(+) = ADP-D-glycero-beta-D-manno-heptose + diphosphate. Its pathway is nucleotide-sugar biosynthesis; ADP-L-glycero-beta-D-manno-heptose biosynthesis; ADP-L-glycero-beta-D-manno-heptose from D-glycero-beta-D-manno-heptose 7-phosphate: step 1/4. The protein operates within nucleotide-sugar biosynthesis; ADP-L-glycero-beta-D-manno-heptose biosynthesis; ADP-L-glycero-beta-D-manno-heptose from D-glycero-beta-D-manno-heptose 7-phosphate: step 3/4. In terms of biological role, catalyzes the phosphorylation of D-glycero-D-manno-heptose 7-phosphate at the C-1 position to selectively form D-glycero-beta-D-manno-heptose-1,7-bisphosphate. Catalyzes the ADP transfer from ATP to D-glycero-beta-D-manno-heptose 1-phosphate, yielding ADP-D-glycero-beta-D-manno-heptose. This is Bifunctional protein HldE from Shewanella baltica (strain OS185).